The chain runs to 294 residues: Elongation factor Ts (294 aa).

An involved in Mg(2+) ion dislocation from EF-Tu region spans residues 79–82 (TDFV).

Belongs to the EF-Ts family.

It is found in the cytoplasm. Associates with the EF-Tu.GDP complex and induces the exchange of GDP to GTP. It remains bound to the aminoacyl-tRNA.EF-Tu.GTP complex up to the GTP hydrolysis stage on the ribosome. This chain is Elongation factor Ts, found in Shouchella clausii (strain KSM-K16) (Alkalihalobacillus clausii).